The primary structure comprises 529 residues: Bifunctional purine biosynthesis protein PurH (529 aa).

Positions 1–148 constitute an MGS-like domain; sequence MQQRRPVRRA…KNHKDVAIVV (148 aa).

The protein belongs to the PurH family.

The catalysed reaction is (6R)-10-formyltetrahydrofolate + 5-amino-1-(5-phospho-beta-D-ribosyl)imidazole-4-carboxamide = 5-formamido-1-(5-phospho-D-ribosyl)imidazole-4-carboxamide + (6S)-5,6,7,8-tetrahydrofolate. The enzyme catalyses IMP + H2O = 5-formamido-1-(5-phospho-D-ribosyl)imidazole-4-carboxamide. It functions in the pathway purine metabolism; IMP biosynthesis via de novo pathway; 5-formamido-1-(5-phospho-D-ribosyl)imidazole-4-carboxamide from 5-amino-1-(5-phospho-D-ribosyl)imidazole-4-carboxamide (10-formyl THF route): step 1/1. It participates in purine metabolism; IMP biosynthesis via de novo pathway; IMP from 5-formamido-1-(5-phospho-D-ribosyl)imidazole-4-carboxamide: step 1/1. The polypeptide is Bifunctional purine biosynthesis protein PurH (Salmonella paratyphi A (strain ATCC 9150 / SARB42)).